A 195-amino-acid polypeptide reads, in one-letter code: MALITDTNRAPAIAPQPKGIIDPNTGRPIGADDPTFLSISDELADRGFLLTTTDELINWARTGSLMWMTFGLACCAVEMMQMSMPRYDCERFGFAPRGSPRQSDVMIVAGTLTNKMAPALRKVYDQMPEPRYVISMGSCANGGGYYHYSYSVVRGCDRVVPVDIYVPGCPPTAEALLYGVLLLQKKIRRTGTIER.

[4Fe-4S] cluster contacts are provided by Cys74, Cys75, Cys139, and Cys169.

Belongs to the complex I 20 kDa subunit family. As to quaternary structure, NDH-1 is composed of 14 different subunits. Subunits NuoB, C, D, E, F, and G constitute the peripheral sector of the complex. It depends on [4Fe-4S] cluster as a cofactor.

The protein localises to the cell inner membrane. The catalysed reaction is a quinone + NADH + 5 H(+)(in) = a quinol + NAD(+) + 4 H(+)(out). In terms of biological role, NDH-1 shuttles electrons from NADH, via FMN and iron-sulfur (Fe-S) centers, to quinones in the respiratory chain. The immediate electron acceptor for the enzyme in this species is believed to be ubiquinone. Couples the redox reaction to proton translocation (for every two electrons transferred, four hydrogen ions are translocated across the cytoplasmic membrane), and thus conserves the redox energy in a proton gradient. This is NADH-quinone oxidoreductase subunit B from Methylobacterium radiotolerans (strain ATCC 27329 / DSM 1819 / JCM 2831 / NBRC 15690 / NCIMB 10815 / 0-1).